Consider the following 220-residue polypeptide: Peptidyl-tRNA hydrolase (220 aa).

Residue tyrosine 14 coordinates tRNA. Residue histidine 19 is the Proton acceptor of the active site. The tRNA site is built by phenylalanine 60, asparagine 62, and asparagine 106.

The protein belongs to the PTH family. In terms of assembly, monomer.

It localises to the cytoplasm. The enzyme catalyses an N-acyl-L-alpha-aminoacyl-tRNA + H2O = an N-acyl-L-amino acid + a tRNA + H(+). In terms of biological role, hydrolyzes ribosome-free peptidyl-tRNAs (with 1 or more amino acids incorporated), which drop off the ribosome during protein synthesis, or as a result of ribosome stalling. Its function is as follows. Catalyzes the release of premature peptidyl moieties from peptidyl-tRNA molecules trapped in stalled 50S ribosomal subunits, and thus maintains levels of free tRNAs and 50S ribosomes. In Campylobacter hominis (strain ATCC BAA-381 / DSM 21671 / CCUG 45161 / LMG 19568 / NCTC 13146 / CH001A), this protein is Peptidyl-tRNA hydrolase.